A 788-amino-acid polypeptide reads, in one-letter code: Integrin beta-6 (788 aa).

The first 21 residues, 1–21 (MGIELLCFFFLFLGRDDHVRG), serve as a signal peptide directing secretion. The region spanning 22 to 71 (GCAMEGAETCGDCLLIGPQCAWCSQENFTHPSGVSERCDTPANLLAKGCQ) is the PSI domain. The Extracellular segment spans residues 22–709 (GCAMEGAETC…KDCPKPPNIP (688 aa)). 19 cysteine pairs are disulfide-bonded: Cys23–Cys41, Cys31–Cys454, Cys34–Cys59, Cys44–Cys70, Cys197–Cys204, Cys252–Cys293, Cys394–Cys406, Cys426–Cys452, Cys456–Cys476, Cys467–Cys479, Cys481–Cys490, Cys492–Cys519, Cys502–Cys517, Cys511–Cys522, Cys524–Cys537, Cys539–Cys560, Cys544–Cys558, Cys552–Cys563, and Cys565–Cys574. Asn48 and Asn97 each carry an N-linked (GlcNAc...) asparagine glycan. In terms of domain architecture, VWFA spans 131 to 371 (YPVDLYYLMD…QLIISAYEEL (241 aa)). Residues Asp140, Ser142, and Ser144 each coordinate Mg(2+). Ca(2+) contacts are provided by Ser144, Asp147, Asp148, and Glu179. Residues Asn235, Asp237, Pro239, and Glu240 each coordinate Ca(2+). Glu240 provides a ligand contact to Mg(2+). N-linked (GlcNAc...) asparagine glycosylation is present at Asn260. Residues Asp271 and Lys355 each contribute to the Ca(2+) site. Asn387, Asn396, and Asn418 each carry an N-linked (GlcNAc...) asparagine glycan. I-EGF domains lie at 456-491 (CQKEVEVNSSKCHNGNGSYQCGVCACNPGHMGPHCE), 492-538 (CGED…PYCQ), 539-575 (CDNFSCVRHKGLLCGDNGDCECGECVCRSGWTGEYCN), and 576-615 (CTTSTDTCISEDGTLCSGRGDCVCGKCVCTNPGASGPTCE). Residues Asn463 and Asn471 are each glycosylated (N-linked (GlcNAc...) asparagine). A glycan (N-linked (GlcNAc...) asparagine) is linked at Asn541. The N-linked (GlcNAc...) asparagine glycan is linked to Asn575. 9 disulfide bridges follow: Cys576-Cys599, Cys583-Cys597, Cys591-Cys602, Cys604-Cys614, Cys617-Cys620, Cys624-Cys670, Cys630-Cys649, Cys633-Cys645, and Cys678-Cys702. Asn696 is a glycosylation site (N-linked (GlcNAc...) asparagine). The chain crosses the membrane as a helical span at residues 710-730 (MIMLGVSLAILLIGVVLLCIW). The segment at 731–758 (KLLVSFHDRKEVAKFEAERSKAKWQTGT) is interaction with HAX1. The Cytoplasmic segment spans residues 731–788 (KLLVSFHDRKEVAKFEAERSKAKWQTGTNPLYRGSTSTFKNVTYKHRDKLKTDLSTDG).

This sequence belongs to the integrin beta chain family. In terms of assembly, heterodimer of an alpha and a beta subunit. Interacts with FLNB. Interacts with HAX1. ITGAV:ITGB6 interacts with FBN1. ITGAV:ITGB6 interacts with TGFB1.

The protein localises to the cell membrane. Its subcellular location is the cell junction. It is found in the focal adhesion. Functionally, integrin alpha-V:beta-6 (ITGAV:ITGB6) is a receptor for fibronectin and cytotactin. It recognizes the sequence R-G-D in its ligands. ITGAV:ITGB6 acts as a receptor for fibrillin-1 (FBN1) and mediates R-G-D-dependent cell adhesion to FBN1. Integrin alpha-V:beta-6 (ITGAV:ITGB6) mediates R-G-D-dependent release of transforming growth factor beta-1 (TGF-beta-1) from regulatory Latency-associated peptide (LAP), thereby playing a key role in TGF-beta-1 activation. This Cavia porcellus (Guinea pig) protein is Integrin beta-6 (ITGB6).